A 449-amino-acid chain; its full sequence is Tubulin beta-6 chain (449 aa).

GTP contacts are provided by glutamine 11, glutamate 69, serine 138, glycine 142, threonine 143, glycine 144, asparagine 204, and asparagine 226. Position 69 (glutamate 69) interacts with Mg(2+). A disordered region spans residues 425–449 (YQDATADDEGEYEEDEDEEEILDHE). Acidic residues predominate over residues 429-449 (TADDEGEYEEDEDEEEILDHE).

Belongs to the tubulin family. Dimer of alpha and beta chains. A typical microtubule is a hollow water-filled tube with an outer diameter of 25 nm and an inner diameter of 15 nM. Alpha-beta heterodimers associate head-to-tail to form protofilaments running lengthwise along the microtubule wall with the beta-tubulin subunit facing the microtubule plus end conferring a structural polarity. Microtubules usually have 13 protofilaments but different protofilament numbers can be found in some organisms and specialized cells. It depends on Mg(2+) as a cofactor.

The protein resides in the cytoplasm. It localises to the cytoskeleton. Functionally, tubulin is the major constituent of microtubules, a cylinder consisting of laterally associated linear protofilaments composed of alpha- and beta-tubulin heterodimers. Microtubules grow by the addition of GTP-tubulin dimers to the microtubule end, where a stabilizing cap forms. Below the cap, tubulin dimers are in GDP-bound state, owing to GTPase activity of alpha-tubulin. This Arabidopsis thaliana (Mouse-ear cress) protein is Tubulin beta-6 chain (TUBB6).